The following is a 576-amino-acid chain: Lipoprotein LpqB (576 aa).

A signal peptide spans 1–16; it reads MRRVTRTIAAAGAAIA. The N-palmitoyl cysteine moiety is linked to residue Cys17. The S-diacylglycerol cysteine moiety is linked to residue Cys17.

The protein belongs to the LpqB lipoprotein family.

It localises to the cell membrane. The polypeptide is Lipoprotein LpqB (Bifidobacterium longum (strain NCC 2705)).